A 364-amino-acid polypeptide reads, in one-letter code: tRNA 2-selenouridine synthase (364 aa).

Residues 14–137 (LIADTPIIDV…LRQTAIQATI (124 aa)) enclose the Rhodanese domain. The S-selanylcysteine intermediate role is filled by Cys97.

This sequence belongs to the SelU family. Monomer.

The catalysed reaction is 5-methylaminomethyl-2-thiouridine(34) in tRNA + selenophosphate + (2E)-geranyl diphosphate + H2O + H(+) = 5-methylaminomethyl-2-selenouridine(34) in tRNA + (2E)-thiogeraniol + phosphate + diphosphate. The enzyme catalyses 5-methylaminomethyl-2-thiouridine(34) in tRNA + (2E)-geranyl diphosphate = 5-methylaminomethyl-S-(2E)-geranyl-thiouridine(34) in tRNA + diphosphate. It catalyses the reaction 5-methylaminomethyl-S-(2E)-geranyl-thiouridine(34) in tRNA + selenophosphate + H(+) = 5-methylaminomethyl-2-(Se-phospho)selenouridine(34) in tRNA + (2E)-thiogeraniol. It carries out the reaction 5-methylaminomethyl-2-(Se-phospho)selenouridine(34) in tRNA + H2O = 5-methylaminomethyl-2-selenouridine(34) in tRNA + phosphate. Involved in the post-transcriptional modification of the uridine at the wobble position (U34) of tRNA(Lys), tRNA(Glu) and tRNA(Gln). Catalyzes the conversion of 2-thiouridine (S2U-RNA) to 2-selenouridine (Se2U-RNA). Acts in a two-step process involving geranylation of 2-thiouridine (S2U) to S-geranyl-2-thiouridine (geS2U) and subsequent selenation of the latter derivative to 2-selenouridine (Se2U) in the tRNA chain. This is tRNA 2-selenouridine synthase from Shigella dysenteriae serotype 1 (strain Sd197).